The following is a 30-amino-acid chain: uncharacterized protein (30 aa).

This is an uncharacterized protein from Bacillus subtilis (strain 168).